Here is a 186-residue protein sequence, read N- to C-terminus: Photosystem I assembly protein Ycf4 (186 aa).

2 helical membrane-spanning segments follow: residues 22–42 and 57–77; these read FCWA…GTSS and IIFF…LFIS.

It belongs to the Ycf4 family.

It is found in the plastid. Its subcellular location is the chloroplast thylakoid membrane. In terms of biological role, seems to be required for the assembly of the photosystem I complex. The chain is Photosystem I assembly protein Ycf4 from Dioscorea elephantipes (Elephant's foot yam).